The primary structure comprises 153 residues: Superoxide dismutase [Cu-Zn] (153 aa).

Cu cation-binding residues include H45, H47, and H62. Cysteines 56 and 145 form a disulfide. Positions 62, 70, 79, and 82 each coordinate Zn(2+). H119 is a binding site for Cu cation.

The protein belongs to the Cu-Zn superoxide dismutase family. In terms of assembly, homodimer. The cofactor is Cu cation. Zn(2+) is required as a cofactor.

The protein resides in the cytoplasm. It catalyses the reaction 2 superoxide + 2 H(+) = H2O2 + O2. Destroys radicals which are normally produced within the cells and which are toxic to biological systems. The protein is Superoxide dismutase [Cu-Zn] of Drosophila orena (Fruit fly).